We begin with the raw amino-acid sequence, 765 residues long: Ubiquitin-like modifier-activating enzyme atg7 (765 aa).

The GXGXXG motif signature appears at 436-441 (GAGTLG). The Glycyl thioester intermediate role is filled by Cys616. 2 disordered regions span residues 646–670 (AAPA…PPNH) and 744–765 (AAND…PELL). Positions 721 to 760 (ALTEKDYITELSGLAEVQRKAEAAANDVEWDSDEEGMEDE) are homodimerization. A compositionally biased stretch (acidic residues) spans 748–765 (VEWDSDEEGMEDEEPELL).

It belongs to the ATG7 family. As to quaternary structure, homodimer. Interacts with ATG8 through a thioester bond between Cys-616 and the C-terminal Gly of ATG8 and with ATG12 through a thioester bond between Cys-616 and the C-terminal Gly of ATG12. Also interacts with ATG3.

Its subcellular location is the cytoplasm. The protein localises to the preautophagosomal structure. In terms of biological role, E1-like activating enzyme involved in the 2 ubiquitin-like systems required for cytoplasm to vacuole transport (Cvt) and autophagy. Activates ATG12 for its conjugation with ATG5 and ATG8 for its conjugation with phosphatidylethanolamine. Both systems are needed for the ATG8 association to Cvt vesicles and autophagosomes membranes. Autophagy is essential for maintenance of amino acid levels and protein synthesis under nitrogen starvation. Required for selective autophagic degradation of the nucleus (nucleophagy) as well as for mitophagy which contributes to regulate mitochondrial quantity and quality by eliminating the mitochondria to a basal level to fulfill cellular energy requirements and preventing excess ROS production. Required for normal mycelial growth and conidiogenesis, and regulates sclerotial formation. Plays an essential role in pathogenesis. The protein is Ubiquitin-like modifier-activating enzyme atg7 of Botryotinia fuckeliana (strain BcDW1) (Noble rot fungus).